Reading from the N-terminus, the 203-residue chain is Dual specificity phosphatase 29 (203 aa).

The region spanning 47-193 (HVNQVWPRIY…LRALDIALQE (147 aa)) is the Tyrosine-protein phosphatase domain. 137–144 (HCVMGRSR) serves as a coordination point for substrate. The active-site Phosphocysteine intermediate is C138.

It belongs to the protein-tyrosine phosphatase family. Non-receptor class dual specificity subfamily.

The protein localises to the cytoplasm. It is found in the nucleus. It catalyses the reaction O-phospho-L-tyrosyl-[protein] + H2O = L-tyrosyl-[protein] + phosphate. The catalysed reaction is O-phospho-L-seryl-[protein] + H2O = L-seryl-[protein] + phosphate. It carries out the reaction O-phospho-L-threonyl-[protein] + H2O = L-threonyl-[protein] + phosphate. Functionally, dual specificity phosphatase able to dephosphorylate phosphotyrosine, phosphoserine and phosphothreonine residues within the same substrate, with a preference for phosphotyrosine as a substrate. Involved in the modulation of AMPK and MAPK1/2 signaling pathways. The polypeptide is Dual specificity phosphatase 29 (dusp29) (Oryzias latipes (Japanese rice fish)).